The chain runs to 401 residues: Protein-glutamate methylesterase/protein-glutamine glutaminase (401 aa).

In terms of domain architecture, Response regulatory spans 16–134 (RVLVIDDSAV…LAGAEEFRRD (119 aa)). Asp-67 carries the 4-aspartylphosphate modification. Residues 146–208 (PIPPVPTQRD…PQGRGTPRNT (63 aa)) form a disordered region. 2 stretches are compositionally biased toward low complexity: residues 166–176 (AAPGAPVARSI) and 185–199 (SAPA…AQPP). A CheB-type methylesterase domain is found at 205 to 400 (PRNTARPEII…PGIVRRAKGG (196 aa)). Active-site residues include Ser-219, His-246, and Asp-342.

Belongs to the CheB family. In terms of processing, phosphorylated by CheA. Phosphorylation of the N-terminal regulatory domain activates the methylesterase activity.

The protein resides in the cytoplasm. The enzyme catalyses [protein]-L-glutamate 5-O-methyl ester + H2O = L-glutamyl-[protein] + methanol + H(+). It carries out the reaction L-glutaminyl-[protein] + H2O = L-glutamyl-[protein] + NH4(+). Involved in chemotaxis. Part of a chemotaxis signal transduction system that modulates chemotaxis in response to various stimuli. Catalyzes the demethylation of specific methylglutamate residues introduced into the chemoreceptors (methyl-accepting chemotaxis proteins or MCP) by CheR. Also mediates the irreversible deamidation of specific glutamine residues to glutamic acid. This Maricaulis maris (strain MCS10) (Caulobacter maris) protein is Protein-glutamate methylesterase/protein-glutamine glutaminase.